A 290-amino-acid polypeptide reads, in one-letter code: Alpha-1,2-colitosyltransferase (290 aa).

It belongs to the glycosyltransferase 11 family. Requires Does not require a metal cofactor. as cofactor.

It carries out the reaction GDP-beta-L-colitose + beta-D-galactosyl-(1-&gt;3)-N-acetyl-D-glucosamine = alpha-L-colitosyl-(1-&gt;2)-beta-D-galactosyl-(1-&gt;3)-N-acetyl-D-glucosamine + GDP + H(+). It functions in the pathway bacterial outer membrane biogenesis; LPS O-antigen biosynthesis. Its activity is regulated as follows. Addition of metal ions dramatically decreases the activity to 0-40%. Its function is as follows. Involved in the biosynthesis of the lipopolysaccharide (LPS) O-antigen region. Catalyzes the transfer of colitose from GDP-colitose to the galactose residue of beta-Gal-(1-&gt;3)-GlcNAc (lacto-N-biose) via an alpha1,2-linkage. Is specific for beta-Gal-(1-&gt;3)-GlcNAc, but can use GDP-L-fucose as the sugar donor with almost the same efficiency as GDP-L-colitose. This is Alpha-1,2-colitosyltransferase from Escherichia coli.